We begin with the raw amino-acid sequence, 590 residues long: Beta-(1--&gt;2)glucan export ATP-binding/permease protein NdvA (590 aa).

Positions 21–301 (VALICGANVA…MSAFANQISE (281 aa)) constitute an ABC transmembrane type-1 domain. 6 helical membrane passes run 22–42 (ALIC…PIMF), 55–75 (VFST…AFVL), 136–156 (QHLS…SMDV), 158–178 (MSMV…LVMK), 248–268 (LSST…VTHG), and 275–295 (VIAF…MSAF). The ABC transporter domain occupies 335-569 (VRFEDVGFEF…NGRFASLLRA (235 aa)). 368-375 (GPTGAGKT) lines the ATP pocket.

This sequence belongs to the ABC transporter superfamily. Beta-(1--&gt;2)glucan exporter (TC 3.A.1.108.1) family. Homodimer.

Its subcellular location is the cell inner membrane. It catalyses the reaction [(1-&gt;2)-beta-D-glucosyl](n)(in) + ATP + H2O = [(1-&gt;2)-beta-D-glucosyl](n)(out) + ADP + phosphate + H(+). Involved in beta-(1--&gt;2)glucan export. Transmembrane domains (TMD) form a pore in the inner membrane and the ATP-binding domain (NBD) is responsible for energy generation. This is Beta-(1--&gt;2)glucan export ATP-binding/permease protein NdvA from Mesorhizobium japonicum (strain LMG 29417 / CECT 9101 / MAFF 303099) (Mesorhizobium loti (strain MAFF 303099)).